The chain runs to 90 residues: Small ribosomal subunit protein uS15 (90 aa).

The protein belongs to the universal ribosomal protein uS15 family. As to quaternary structure, part of the 30S ribosomal subunit. Forms a bridge to the 50S subunit in the 70S ribosome, contacting the 23S rRNA.

Functionally, one of the primary rRNA binding proteins, it binds directly to 16S rRNA where it helps nucleate assembly of the platform of the 30S subunit by binding and bridging several RNA helices of the 16S rRNA. Its function is as follows. Forms an intersubunit bridge (bridge B4) with the 23S rRNA of the 50S subunit in the ribosome. The chain is Small ribosomal subunit protein uS15 from Paraburkholderia xenovorans (strain LB400).